The primary structure comprises 346 residues: 3 beta-hydroxysteroid dehydrogenase/Delta 5--&gt;4-isomerase (346 aa).

The Proton acceptor role is filled by Tyr-147. Residue Lys-151 participates in NAD(+) binding.

Belongs to the 3-beta-HSD family.

The enzyme catalyses a 3beta-hydroxy-Delta(5)-steroid + NAD(+) = a 3-oxo-Delta(5)-steroid + NADH + H(+). The catalysed reaction is a 3-oxo-Delta(5)-steroid = a 3-oxo-Delta(4)-steroid. The protein operates within lipid metabolism; steroid biosynthesis. Its function is as follows. Catalyzes the oxidative conversion of Delta(5)-ene-3-beta-hydroxy steroid, and the oxidative conversion of ketosteroids. The 3-beta-HSD enzymatic system plays a crucial role in the biosynthesis of all classes of hormonal steroids. During viral infection, steroid production contributes to virulence by inhibiting the host inflammatory response. This chain is 3 beta-hydroxysteroid dehydrogenase/Delta 5--&gt;4-isomerase (OPG174), found in Vaccinia virus (strain Western Reserve) (VACV).